Reading from the N-terminus, the 144-residue chain is 3-hydroxyacyl-[acyl-carrier-protein] dehydratase FabZ (144 aa).

H48 is an active-site residue.

Belongs to the thioester dehydratase family. FabZ subfamily.

It is found in the cytoplasm. It catalyses the reaction a (3R)-hydroxyacyl-[ACP] = a (2E)-enoyl-[ACP] + H2O. Its function is as follows. Involved in unsaturated fatty acids biosynthesis. Catalyzes the dehydration of short chain beta-hydroxyacyl-ACPs and long chain saturated and unsaturated beta-hydroxyacyl-ACPs. In Listeria innocua serovar 6a (strain ATCC BAA-680 / CLIP 11262), this protein is 3-hydroxyacyl-[acyl-carrier-protein] dehydratase FabZ.